The sequence spans 487 residues: N-succinylglutamate 5-semialdehyde dehydrogenase (487 aa).

221–226 (GSSDTG) contributes to the NAD(+) binding site. Catalysis depends on residues glutamate 244 and cysteine 278.

It belongs to the aldehyde dehydrogenase family. AstD subfamily.

The enzyme catalyses N-succinyl-L-glutamate 5-semialdehyde + NAD(+) + H2O = N-succinyl-L-glutamate + NADH + 2 H(+). It functions in the pathway amino-acid degradation; L-arginine degradation via AST pathway; L-glutamate and succinate from L-arginine: step 4/5. In terms of biological role, catalyzes the NAD-dependent reduction of succinylglutamate semialdehyde into succinylglutamate. This is N-succinylglutamate 5-semialdehyde dehydrogenase from Burkholderia pseudomallei (strain 1106a).